The following is a 246-amino-acid chain: Myelin protein P0 (246 aa).

The N-terminal stretch at 1-27 (MFRDLKPAYLFCCSVLYAFSVLRPSQG) is a signal peptide. In terms of domain architecture, Ig-like V-type spans 28-143 (ISVSTHHNLH…VGTSSDVHLT (116 aa)). Residues 28 to 150 (ISVSTHHNLH…HLTVYDKIPP (123 aa)) lie on the Extracellular side of the membrane. A disulfide bridge links Cys48 with Cys125. An N-linked (GlcNAc...) (complex) asparagine glycan is attached at Asn120. The helical transmembrane segment at 151–178 (VGAGVVSGAIIGTFLGIILLIVGGLYLF) threads the bilayer. At 179–246 (RYIVRRRARS…KLSESKRDKK (68 aa)) the chain is on the cytoplasmic side. The segment at 200-246 (AERGKVSGKAGTVSKGPVLYATLDQSKSGKGASEKKSKLSESKRDKK) is disordered. The segment covering 231–246 (ASEKKSKLSESKRDKK) has biased composition (basic and acidic residues).

It belongs to the myelin P0 protein family. Post-translationally, N-glycan is sulfated. In terms of tissue distribution, found only in peripheral nervous system Schwann cells.

Its subcellular location is the cell membrane. Creation of an extracellular membrane face which guides the wrapping process and ultimately compacts adjacent lamellae. The polypeptide is Myelin protein P0 (mpz) (Heterodontus francisci (Horn shark)).